A 72-amino-acid polypeptide reads, in one-letter code: Translation initiation factor IF-1 (72 aa).

One can recognise an S1-like domain in the interval methionine 1–lysine 72. Position 60 is a phosphotyrosine (tyrosine 60).

The protein belongs to the IF-1 family. In terms of assembly, component of the 30S ribosomal translation pre-initiation complex which assembles on the 30S ribosome in the order IF-2 and IF-3, IF-1 and N-formylmethionyl-tRNA(fMet); mRNA recruitment can occur at any time during PIC assembly.

The protein localises to the cytoplasm. One of the essential components for the initiation of protein synthesis. Stabilizes the binding of IF-2 and IF-3 on the 30S subunit to which N-formylmethionyl-tRNA(fMet) subsequently binds. Helps modulate mRNA selection, yielding the 30S pre-initiation complex (PIC). Upon addition of the 50S ribosomal subunit IF-1, IF-2 and IF-3 are released leaving the mature 70S translation initiation complex. The sequence is that of Translation initiation factor IF-1 from Shouchella clausii (strain KSM-K16) (Alkalihalobacillus clausii).